The primary structure comprises 364 residues: MPYQYPALTPEQKKELSDIAHRIVAPGKGILAADESTGSIAKRLQSIGTENTEENRRFYRQLLLTADDRVNPCIGGVILFHETLYQKADDGRPFPQVIKSKGGVVGIKVDKGVVPLAGTNGETTTQGLDGLSERCAQYKKDGADFAKWRCVLKIGEHTPSALAIMENANVLARYASICQQNGIVPIVEPEILPDGDHDLKRCQYVTEKVLAAVYKALSDHHIYLEGTLLKPNMVTPGHACTQKFSHEEIVMATVTALRRTVPPAVTGITFLSGGQSEEEASINLNAINKCPLLKPWALTFSYGRALQASALKAWGGKKENLKAAQEEYVKRALANSLACQGKYTPSGQAGAAASESLFVSNHAY.

Phosphotyrosine is present on Tyr5. Thr9 carries the phosphothreonine modification. Phosphoserine is present on residues Ser36 and Ser39. At Lys42 the chain carries N6-acetyllysine; alternate. Residue Lys42 forms a Glycyl lysine isopeptide (Lys-Gly) (interchain with G-Cter in SUMO1); alternate linkage. A Glycyl lysine isopeptide (Lys-Gly) (interchain with G-Cter in SUMO2); alternate cross-link involves residue Lys42. Arg43 is a binding site for beta-D-fructose 1,6-bisphosphate. At Ser46 the chain carries Phosphoserine. The residue at position 99 (Lys99) is an N6-(2-hydroxyisobutyryl)lysine. Lys108 bears the N6-acetyllysine mark. Lys111 is modified (N6-acetyllysine; alternate). Lys111 carries the post-translational modification N6-malonyllysine; alternate. Ser132 carries the phosphoserine modification. An N6-(2-hydroxyisobutyryl)lysine modification is found at Lys147. Glu188 (proton acceptor) is an active-site residue. The active-site Schiff-base intermediate with dihydroxyacetone-P is Lys230. Ser272 is subject to Phosphoserine. Beta-D-fructose 1,6-bisphosphate contacts are provided by residues 272 to 274 (SGG), Ser301, and Arg304. At Lys312 the chain carries N6-malonyllysine. At Lys330 the chain carries N6-acetyllysine.

Belongs to the class I fructose-bisphosphate aldolase family. Homotetramer. Interacts with SNX9 and WAS. Interacts with FBP2; the interaction blocks FBP2 inhibition by physiological concentrations of AMP and reduces inhibition by Ca(2+).

The protein localises to the cytoplasm. The protein resides in the myofibril. It is found in the sarcomere. It localises to the i band. Its subcellular location is the m line. It catalyses the reaction beta-D-fructose 1,6-bisphosphate = D-glyceraldehyde 3-phosphate + dihydroxyacetone phosphate. It functions in the pathway carbohydrate degradation; glycolysis; D-glyceraldehyde 3-phosphate and glycerone phosphate from D-glucose: step 4/4. Catalyzes the reversible conversion of beta-D-fructose 1,6-bisphosphate (FBP) into two triose phosphate and plays a key role in glycolysis and gluconeogenesis. In addition, may also function as scaffolding protein. This is Fructose-bisphosphate aldolase A (ALDOA) from Pongo abelii (Sumatran orangutan).